Consider the following 395-residue polypeptide: Elongation factor Tu (395 aa).

A tr-type G domain is found at 10 to 204 (KPHVNIGTIG…EVDAYIPTPE (195 aa)). The segment at 19 to 26 (GHVDHGKT) is G1. GTP is bound at residue 19–26 (GHVDHGKT). Residue T26 coordinates Mg(2+). The G2 stretch occupies residues 60–64 (GITIS). The tract at residues 81–84 (DCPG) is G3. Residues 81 to 85 (DCPGH) and 136 to 139 (NKCD) each bind GTP. Residues 136–139 (NKCD) form a G4 region. Positions 174–176 (SAL) are G5.

The protein belongs to the TRAFAC class translation factor GTPase superfamily. Classic translation factor GTPase family. EF-Tu/EF-1A subfamily. As to quaternary structure, monomer.

The protein localises to the cytoplasm. The enzyme catalyses GTP + H2O = GDP + phosphate + H(+). GTP hydrolase that promotes the GTP-dependent binding of aminoacyl-tRNA to the A-site of ribosomes during protein biosynthesis. This Bacillus cereus (strain ATCC 10987 / NRS 248) protein is Elongation factor Tu.